The following is a 471-amino-acid chain: ATP synthase subunit beta (471 aa).

156 to 163 contributes to the ATP binding site; the sequence is GGAGVGKT.

Belongs to the ATPase alpha/beta chains family. F-type ATPases have 2 components, CF(1) - the catalytic core - and CF(0) - the membrane proton channel. CF(1) has five subunits: alpha(3), beta(3), gamma(1), delta(1), epsilon(1). CF(0) has three main subunits: a(1), b(2) and c(9-12). The alpha and beta chains form an alternating ring which encloses part of the gamma chain. CF(1) is attached to CF(0) by a central stalk formed by the gamma and epsilon chains, while a peripheral stalk is formed by the delta and b chains.

It is found in the cell membrane. The catalysed reaction is ATP + H2O + 4 H(+)(in) = ADP + phosphate + 5 H(+)(out). Functionally, produces ATP from ADP in the presence of a proton gradient across the membrane. The catalytic sites are hosted primarily by the beta subunits. In Macrococcus caseolyticus (strain JCSC5402) (Macrococcoides caseolyticum), this protein is ATP synthase subunit beta.